Reading from the N-terminus, the 1868-residue chain is Protein TIC 214 (1868 aa).

A run of 6 helical transmembrane segments spans residues 11-31 (LLLL…YYGF), 64-84 (FIMG…HLAL), 87-107 (PHTL…FFWN), 126-146 (LSIQ…HFIL), 166-186 (ILFV…LMKS), and 221-241 (IFSI…PSPI). Over residues 248-276 (ESSKGEEKKKTEKERDVEMETISKTKKIE) the composition is skewed to basic and acidic residues. 5 disordered regions span residues 248–277 (ESSK…KIEQ), 617–643 (FDFE…GIRS), 658–700 (DEDT…QAEE), 782–806 (TSDY…KRKE), and 1537–1607 (YIDP…RKKK). A compositionally biased stretch (acidic residues) spans 617–636 (FDFEEEEEEEEEEDDEEEPT). A compositionally biased stretch (polar residues) spans 674 to 683 (AKNSDQAKNS). Basic and acidic residues-rich tracts occupy residues 684 to 700 (DQAK…QAEE), 789 to 806 (GAKE…KRKE), and 1537 to 1576 (YIDP…ERQH).

The protein belongs to the TIC214 family. In terms of assembly, part of the Tic complex.

Its subcellular location is the plastid. The protein localises to the chloroplast inner membrane. Its function is as follows. Involved in protein precursor import into chloroplasts. May be part of an intermediate translocation complex acting as a protein-conducting channel at the inner envelope. The chain is Protein TIC 214 from Nuphar advena (Common spatterdock).